A 1807-amino-acid polypeptide reads, in one-letter code: Integrin beta-4 (1807 aa).

The first 27 residues, 1-27 (MAGLCSSPWVKLLLAVVLSAGLPGNMA), serve as a signal peptide directing secretion. Over 28 to 713 (NRCKKAQVKS…KKKDCLPAPS (686 aa)) the chain is Extracellular. The PSI domain maps to 29-73 (RCKKAQVKSCTECIRVDKSCAYCTDELFKERRCNTQADVLAAGCR). 8 disulfide bridges follow: C30/C48, C38/C456, C41/C61, C51/C72, C245/C288, C458/C477, C469/C480, and C482/C491. A VWFA domain is found at 131–340 (DLYILMDFSN…SYYEKLHKYF (210 aa)). Residues S139 and S141 each coordinate Mg(2+). Ca(2+)-binding residues include S141, D144, D145, and D176. Residues 194-199 (WPNSDP) are involved in NRG1- and IGF1-binding. Residues N228, D230, P232, and E233 each contribute to the Ca(2+) site. A Mg(2+)-binding site is contributed by E233. N327 carries an N-linked (GlcNAc...) asparagine glycan. Residue E350 participates in Ca(2+) binding. I-EGF domains follow at residues 458 to 492 (CELQ…KTCN), 493 to 538 (CSTG…HFCE), 539 to 575 (YDNF…RSCD), and 576 to 617 (CPLS…TTCE). N492 is a glycosylation site (N-linked (GlcNAc...) asparagine). 11 disulfide bridges follow: C493-C521, C504-C519, C513-C524, C526-C537, C544-C558, C552-C563, C565-C574, C576-C599, C583-C597, C591-C602, and C604-C616. N-linked (GlcNAc...) asparagine glycosylation occurs at N580. N619 is a glycosylation site (N-linked (GlcNAc...) asparagine). 4 disulfides stabilise this stretch: C628/C673, C634/C653, C637/C650, and C682/C708. Residue N697 is glycosylated (N-linked (GlcNAc...) asparagine). A helical transmembrane segment spans residues 714 to 734 (WWLIPLLIFLLLLLVLLLLLC). Residues 734–751 (CWKYCACCKACLGLLPCC) form a palmitoylated on several cysteines region. The Cytoplasmic portion of the chain corresponds to 735–1807 (WKYCACCKAC…THMDQQFFQT (1073 aa)). Phosphoserine is present on residues S773, S1071, and S1121. The Calx-beta domain maps to 981–1086 (VNITIIKEQA…QVRRFQVQLS (106 aa)). Positions 1119–1141 (SASPPLPRGDLGAPQNPNAKAAG) are disordered. Fibronectin type-III domains are found at residues 1131-1220 (APQN…THQE) and 1224-1323 (EPGR…TQPK). A phosphoserine mark is found at S1386, S1389, and S1405. At T1418 the chain carries Phosphothreonine. Residue S1425 is modified to Phosphoserine. Residue T1514 is modified to Phosphothreonine. Fibronectin type-III domains lie at 1514–1609 (TPTR…VHPQ) and 1627–1723 (APGP…SQDG). S1776 carries the phosphoserine modification.

The protein belongs to the integrin beta chain family. As to quaternary structure, heterodimer of an alpha and a beta subunit. Beta-4 associates with alpha-6. Interacts (via cytoplasmic region) with COL17A1 (via cytoplasmic region). Interacts (via cytoplasmic region) with DST isoform 3 (via N-terminus). Interacts (via cytoplasmic domain) with DST (via N-terminus). Interacts with RAC1. ITGA6:ITGB4 is found in a ternary complex with NRG1 and ERBB3. ITGA6:ITGB4 is found in a ternary complex with IGF1 and IGF1R. ITGA6:ITGB4 interacts with IGF2. Interacts with TMEM268; this interaction prevents ITGB4 degradation. In terms of processing, palmitoylated by DHHC3 at several cysteines of the membrane-proximal region, enhancing stability and cell surface expression. Palmitoylation also promotes secondary association with tertaspanins.

Its subcellular location is the cell membrane. It is found in the cell junction. The protein localises to the hemidesmosome. In terms of biological role, integrin alpha-6/beta-4 is a receptor for laminin. It plays a critical structural role in the hemidesmosome of epithelial cells. Is required for the regulation of keratinocyte polarity and motility. ITGA6:ITGB4 binds to NRG1 (via EGF domain) and this binding is essential for NRG1-ERBB signaling. ITGA6:ITGB4 binds to IGF1 and this binding is essential for IGF1 signaling. ITGA6:ITGB4 binds to IGF2 and this binding is essential for IGF2 signaling. The chain is Integrin beta-4 (Itgb4) from Rattus norvegicus (Rat).